A 2957-amino-acid polypeptide reads, in one-letter code: Toxin PAU_02230 (2957 aa).

Positions 949–968 (TSVSPAETAQSTPEPLSDFA) are disordered. Residues 2115–2144 (EWFKHSETGLKGGGPIDDIRKYIARKSAIK) are membrane localization domain that interacts with the inner leaflet of the plasma membrane. Positions 2115 to 2449 (EWFKHSETGL…TSTIVTPLAP (335 aa)) are tyrosine glycosyltransferase PaToxG. Residues 2169-2171 (IWI) and 2259-2260 (SD) each bind UDP-N-acetyl-alpha-D-glucosamine. Positions 2276 and 2278 each coordinate a divalent metal cation. Positions 2276–2279 (DIDD) match the DxDD motif motif. Asn-2312 is a UDP-N-acetyl-alpha-D-glucosamine binding site. The interval 2450–2672 (KTEMLPPVPS…NYSVNPTAEN (223 aa)) is sseI-like deamidase PaToxD. Active-site for deamidase activity residues include Cys-2509, His-2547, and Asp-2562. The tract at residues 2667 to 2705 (NPTAENLSPPPPPPIPSHGQVPKTVTPPPPPMRSPLSLS) is disordered.

Requires a divalent metal cation as cofactor.

It is found in the secreted. The protein resides in the host cell membrane. The enzyme catalyses L-tyrosyl-[protein] + UDP-N-acetyl-alpha-D-glucosamine = O-(N-acetyl-alpha-D-glucosaminyl)-L-tyrosyl-[protein] + UDP + H(+). It catalyses the reaction L-glutaminyl-[protein] + H2O = L-glutamyl-[protein] + NH4(+). Its function is as follows. Toxin that acts on host cells by modifying Rho proteins by tyrosine GlcNAcylation and heterotrimeric G alpha proteins by deamidation. Catalyzes the mono-O-GlcNAcylation of small GTPases of the Rho family (RhoA, RhoB, RhoC, Rac1, Rac2, Rac3, Cdc42) in eukaryotic host cells at the conserved tyrosine residue located in the switch I region (Tyr-32/34), using UDP-N-acetylglucosamine (UDP-GlcNAc) as the sugar donor; other GTPases of the Rho, Ras or Rab families are not substrates. Tyrosine glycosylation inhibits Rho activation and prevents interaction with downstream effectors, resulting in actin disassembly, inhibition of phagocytosis, cell rounding, and toxicity toward insects and mammalian cells. Also catalyzes the deamidation of the catalytic glutamine in heterotrimeric G alpha proteins (Gi, Gq/11), which blocks GTP hydrolysis and arrests the G proteins in a permanent active state leading to activation of Rho GTPases. Thus, PaTox hijacks host GTPase signaling in a bidirectional manner by deamidation-induced activation and glycosylation-induced inactivation of GTPases. The polypeptide is Toxin PAU_02230 (Photorhabdus asymbiotica subsp. asymbiotica (strain ATCC 43949 / 3105-77) (Xenorhabdus luminescens (strain 2))).